Reading from the N-terminus, the 272-residue chain is Magnetosome protein MamQ 1 (272 aa).

Residues 1–46 are Cytoplasmic-facing; the sequence is MALGDANVGSAPGVDFSALQRVKQSEELLAQLYVVEETPRRLGRGP. Residues 47–67 traverse the membrane as a helical segment; sequence VHALMVISVLSVVAFIATLLM. Residues 68–272 lie on the Lumenal side of the membrane; sequence RYNTFVTMSE…PLNHAQDIKK (205 aa).

The protein belongs to the LemA family.

The protein localises to the magnetosome membrane. Its function is as follows. Essential for magnetosome formation. Can be used to induce magnetosome formation. The sequence is that of Magnetosome protein MamQ 1 (mamQ1) from Paramagnetospirillum magneticum (strain ATCC 700264 / AMB-1) (Magnetospirillum magneticum).